A 122-amino-acid chain; its full sequence is Large ribosomal subunit protein uL14c (122 aa).

This sequence belongs to the universal ribosomal protein uL14 family. In terms of assembly, part of the 50S ribosomal subunit.

The protein localises to the plastid. Its subcellular location is the chloroplast. Binds to 23S rRNA. The polypeptide is Large ribosomal subunit protein uL14c (Marchantia polymorpha (Common liverwort)).